A 431-amino-acid polypeptide reads, in one-letter code: MQNIHFIGIGGIGISALARFLKEKGFKISGSDLKESKITKELEKEGVKVSIPHHKDNILNKDLVIYSAAIKEENPEFKYAKELGIKCLSRKEALPLILEDKRVFAVAGAHGKSTTSSILASLLDDASVIIGAILKEFGSNMIYKESQNLIFEADESDSSFLNSNPYLAIVTNAEAEHLDHYGNEVSKLHHAYAEFLDTAKIRVINAEDEFLKNYKNESIKLYPSKDIKNCTMCIENFKPFTSFELKDLGEFKIFGMGYHLALDASLAILAALNFLDIETIGARLKNYQGIKKRFDILHADENLVLIDDYGHHPTEIKATLSAAQEYAKLGGYKKITAIFEPHRYTRLAVNLKEFAKAFEGVDELVILPVYAAGEEPIEIDLKAVFPKALFVENIQREGKFLVASKGQVFEEGLIIGFGAGDISNKLRQKNE.

An ATP-binding site is contributed by 108-114 (GAHGKST).

It belongs to the MurCDEF family.

Its subcellular location is the cytoplasm. The enzyme catalyses UDP-N-acetyl-alpha-D-muramate + L-alanine + ATP = UDP-N-acetyl-alpha-D-muramoyl-L-alanine + ADP + phosphate + H(+). It participates in cell wall biogenesis; peptidoglycan biosynthesis. In terms of biological role, cell wall formation. The sequence is that of UDP-N-acetylmuramate--L-alanine ligase from Campylobacter jejuni subsp. doylei (strain ATCC BAA-1458 / RM4099 / 269.97).